The primary structure comprises 945 residues: 26S proteasome regulatory subunit RPN2 (945 aa).

Position 2 is an N-acetylserine (Ser-2). PC repeat units lie at residues 366–399 (TATASLGVIHKGNLLEGKKVMAPYLPGSRASSRF), 403–440 (GSLYGLGLIYAGFGRDTTDYLKNIIVENSGTSGDEDVD), 445–479 (GASLGIGLAAMGSANIEVYEALKEVLYNDSATSGE), 480–514 (AAALGMGLCMLGTGKPEAIHDMFTYSQETQHGNIT), 516–549 (GLAVGLALINYGRQELADDLITKMLASDESLLRY), 550–585 (GGAFTIALAYAGTGNNSAVKRLLHVAVSDSNDDVRR), 586–618 (AAVIALGFVLLRDYTTVPRIVQLLSKSHNAHVR), 620–654 (GTAFALGIACAGKGLQSAIDVLDPLTKDPVDFVRQ), 655–692 (AAMIALSMILIQQTEKLNPQVADINKNFLSVITNKHQE), and 698–734 (GACVAQGIMNAGGRNVTIQLENADTGTLDTKSVVGLV). Position 801 is a phosphothreonine (Thr-801). The span at 810 to 819 (AKARAKKTKK) shows a compositional bias: basic residues. The segment at 810 to 851 (AKARAKKTKKEKGPNEEEKKKEHEEKEKERETNKKGIKETKE) is disordered. The span at 820–851 (EKGPNEEEKKKEHEEKEKERETNKKGIKETKE) shows a compositional bias: basic and acidic residues. Thr-932 carries the post-translational modification Phosphothreonine.

The protein belongs to the proteasome subunit S1 family. In terms of assembly, interacts with UBR1. N-acetylated by NAT1.

Acts as a regulatory subunit of the 26S proteasome which is involved in the ATP-dependent degradation of ubiquitinated proteins. The sequence is that of 26S proteasome regulatory subunit RPN2 (RPN2) from Saccharomyces cerevisiae (strain ATCC 204508 / S288c) (Baker's yeast).